The sequence spans 835 residues: Neuroligin-2 (835 aa).

A signal peptide spans M1–A14. Residues Q15–S677 are Extracellular-facing. N98 and N136 each carry an N-linked (GlcNAc...) asparagine glycan. 3 disulfide bridges follow: C106/C141, C317/C328, and C487/C521. Residue N522 is glycosylated (N-linked (GlcNAc...) asparagine). A disordered region spans residues P623 to D668. Over residues P630 to G658 the composition is skewed to pro residues. Residues V678 to Y698 form a helical membrane-spanning segment. Residues V678–Y698 are required for interaction with LHFPL4. At Y699–V835 the chain is on the cytoplasmic side. S713 and S718 each carry phosphoserine. The interval L790–V835 is disordered. A compositionally biased stretch (pro residues) spans L795 to T818. The span at N823–V835 shows a compositional bias: polar residues.

The protein belongs to the type-B carboxylesterase/lipase family. As to quaternary structure, interacts with neurexins NRXN1, NRXN2 and NRXN3. Interaction with neurexins is mediated by heparan sulfate glycan modification on neurexin. Interacts (via its C-terminus) with DLG4/PSD-95 (via PDZ domain 3). Interacts with PATJ. Interacts with GPHN. Interacts with MDGA1 and MDGA2. Found in a complex with MAGI2 and IGSF9B, where it interacts with MAGI2 (via WW 1, WW 2 and PDZ 2 domains). Identified in a complex of 720 kDa composed of LHFPL4, NLGN2, GABRA1, GABRB2, GABRG2 and GABRB3. Interacts with LHFPL4; leading to mutual regulation of the protein level and synaptic clustering. Interacts with NLGN2. Expressed in the blood vessel walls. Detected in colon, brain and pancreas islets of Langerhans (at protein level). Detected in brain, and at lower levels in pancreas islet beta cells.

It localises to the cell membrane. The protein resides in the postsynaptic cell membrane. It is found in the presynaptic cell membrane. Functionally, transmembrane scaffolding protein involved in cell-cell interactions via its interactions with neurexin family members. Mediates cell-cell interactions both in neurons and in other types of cells, such as Langerhans beta cells. Plays a role in synapse function and synaptic signal transmission, especially via gamma-aminobutyric acid receptors (GABA(A) receptors). Functions by recruiting and clustering synaptic proteins. Promotes clustering of postsynaptic GABRG2 and GPHN. Promotes clustering of postsynaptic LHFPL4. Modulates signaling by inhibitory synapses, and thereby plays a role in controlling the ratio of signaling by excitatory and inhibitory synapses and information processing. Required for normal signal amplitude from inhibitory synapses, but is not essential for normal signal frequency. May promote the initial formation of synapses, but is not essential for this. In vitro, triggers the de novo formation of presynaptic structures. Mediates cell-cell interactions between Langerhans beta cells and modulates insulin secretion. The sequence is that of Neuroligin-2 (NLGN2) from Homo sapiens (Human).